The following is a 111-amino-acid chain: uncharacterized protein (111 aa).

The next 4 membrane-spanning stretches (helical) occupy residues phenylalanine 4–phenylalanine 21, leucine 28–tyrosine 47, threonine 51–phenylalanine 73, and serine 80–methionine 102.

The protein resides in the cell membrane. This is an uncharacterized protein from Bacillus subtilis (strain 168).